The primary structure comprises 359 residues: Protein-arginine kinase (359 aa).

Residues 25–257 enclose the Phosphagen kinase C-terminal domain; the sequence is IVISSRVRLA…QQVIEQERML (233 aa). ATP is bound by residues 28–32, H93, R128, 179–183, and 210–215; these read SSRVR, RASLM, and RGIYGE. The RDXXRA motif of the pArg binding pocket involved in allosteric regulation signature appears at 340–345; sequence RDAKRA.

Belongs to the ATP:guanido phosphotransferase family.

The catalysed reaction is L-arginyl-[protein] + ATP = N(omega)-phospho-L-arginyl-[protein] + ADP + H(+). Its activity is regulated as follows. Appears to be allosterically activated by the binding of pArg-containing polypeptides to the pArg-binding pocket localized in the C-terminal domain of McsB. Catalyzes the specific phosphorylation of arginine residues in proteins. The sequence is that of Protein-arginine kinase from Syntrophomonas wolfei subsp. wolfei (strain DSM 2245B / Goettingen).